The sequence spans 311 residues: Cytosolic Fe-S cluster assembly factor Nubp1 homolog (311 aa).

4 residues coordinate [4Fe-4S] cluster: cysteine 9, cysteine 23, cysteine 26, and cysteine 32. 63–70 (GKGGVGKS) is a binding site for ATP. Residues cysteine 240 and cysteine 243 each coordinate [4Fe-4S] cluster.

The protein belongs to the Mrp/NBP35 ATP-binding proteins family. NUBP1/NBP35 subfamily. Heterotetramer of 2 Nubp1 and 2 Nubp2 chains. [4Fe-4S] cluster serves as cofactor.

The protein resides in the cytoplasm. Component of the cytosolic iron-sulfur (Fe/S) protein assembly (CIA) machinery. Required for maturation of extramitochondrial Fe-S proteins. The Nubp1-Nubp2 heterotetramer forms a Fe-S scaffold complex, mediating the de novo assembly of an Fe-S cluster and its transfer to target apoproteins. In Drosophila yakuba (Fruit fly), this protein is Cytosolic Fe-S cluster assembly factor Nubp1 homolog.